We begin with the raw amino-acid sequence, 341 residues long: Heat-inducible transcription repressor HrcA (341 aa).

Belongs to the HrcA family.

Functionally, negative regulator of class I heat shock genes (grpE-dnaK-dnaJ and groELS operons). Prevents heat-shock induction of these operons. In Leptothrix cholodnii (strain ATCC 51168 / LMG 8142 / SP-6) (Leptothrix discophora (strain SP-6)), this protein is Heat-inducible transcription repressor HrcA.